The following is a 335-amino-acid chain: Aspartate carbamoyltransferase catalytic subunit (335 aa).

The carbamoyl phosphate site is built by Arg-81 and Thr-82. Residue Lys-109 coordinates L-aspartate. Carbamoyl phosphate is bound by residues Arg-131, His-159, and Gln-162. L-aspartate contacts are provided by Arg-192 and Arg-246. 2 residues coordinate carbamoyl phosphate: Gly-287 and Pro-288.

It belongs to the aspartate/ornithine carbamoyltransferase superfamily. ATCase family. In terms of assembly, heterododecamer (2C3:3R2) of six catalytic PyrB chains organized as two trimers (C3), and six regulatory PyrI chains organized as three dimers (R2).

It catalyses the reaction carbamoyl phosphate + L-aspartate = N-carbamoyl-L-aspartate + phosphate + H(+). The protein operates within pyrimidine metabolism; UMP biosynthesis via de novo pathway; (S)-dihydroorotate from bicarbonate: step 2/3. Functionally, catalyzes the condensation of carbamoyl phosphate and aspartate to form carbamoyl aspartate and inorganic phosphate, the committed step in the de novo pyrimidine nucleotide biosynthesis pathway. The protein is Aspartate carbamoyltransferase catalytic subunit of Caulobacter sp. (strain K31).